Consider the following 212-residue polypeptide: Tetraspanin-31-B (212 aa).

The Cytoplasmic segment spans residues 1 to 12 (MVCGGFTCSKNA). A helical transmembrane segment spans residues 13 to 33 (LCALNVVYMLVGVLLIIVAAW). Topologically, residues 34-44 (GKGFGIVSSIH) are extracellular. A helical membrane pass occupies residues 45–65 (IIGGVIAIGVFLLLIAIIGLI). Over 66 to 72 (GAVSHHQ) the chain is Cytoplasmic. A helical membrane pass occupies residues 73–93 (VMLFIYMVVLILVFIFQFIVS). Over 94–175 (CSCLAMNRSQ…MLNHADEALK (82 aa)) the chain is Extracellular. Residues asparagine 100, asparagine 109, asparagine 117, and asparagine 134 are each glycosylated (N-linked (GlcNAc...) asparagine). Residues 176–196 (ILGGVGLFFSFTEILGVWLAF) form a helical membrane-spanning segment. Residues 197–212 (RYRNQKDPRANPSAFL) are Cytoplasmic-facing.

It belongs to the tetraspanin (TM4SF) family.

The protein localises to the membrane. This chain is Tetraspanin-31-B (tspan31-b), found in Xenopus laevis (African clawed frog).